The sequence spans 428 residues: Adenylosuccinate synthetase (428 aa).

GTP is bound by residues 11–17 (GDEGKGK) and 39–41 (GHT). The active-site Proton acceptor is D12. Residues D12 and G39 each coordinate Mg(2+). Residues 12–15 (DEGK), 37–40 (NAGH), T130, R144, N226, T241, and R305 contribute to the IMP site. The active-site Proton donor is the H40. 301-307 (VTTGRKR) lines the substrate pocket. Residues R307, 333–335 (KLD), and 415–417 (GTG) each bind GTP.

Belongs to the adenylosuccinate synthetase family. As to quaternary structure, homodimer. Mg(2+) serves as cofactor.

It is found in the cytoplasm. It carries out the reaction IMP + L-aspartate + GTP = N(6)-(1,2-dicarboxyethyl)-AMP + GDP + phosphate + 2 H(+). It functions in the pathway purine metabolism; AMP biosynthesis via de novo pathway; AMP from IMP: step 1/2. Functionally, plays an important role in the de novo pathway and in the salvage pathway of purine nucleotide biosynthesis. Catalyzes the first committed step in the biosynthesis of AMP from IMP. This is Adenylosuccinate synthetase from Candida tropicalis (strain ATCC MYA-3404 / T1) (Yeast).